The following is a 293-amino-acid chain: Glycine--tRNA ligase alpha subunit (293 aa).

This sequence belongs to the class-II aminoacyl-tRNA synthetase family. Tetramer of two alpha and two beta subunits.

The protein resides in the cytoplasm. The catalysed reaction is tRNA(Gly) + glycine + ATP = glycyl-tRNA(Gly) + AMP + diphosphate. This is Glycine--tRNA ligase alpha subunit from Wolinella succinogenes (strain ATCC 29543 / DSM 1740 / CCUG 13145 / JCM 31913 / LMG 7466 / NCTC 11488 / FDC 602W) (Vibrio succinogenes).